The chain runs to 261 residues: Hydroxylase cctR (261 aa).

The chain crosses the membrane as a helical span at residues 38-58 (VFVSLLILSNTISFGLLGWIG). N-linked (GlcNAc...) asparagine glycosylation occurs at asparagine 95. Short sequence motifs (HXXHC) lie at residues 146–150 (HEIHC) and 176–180 (HIAHC).

This sequence belongs to the ustYa family.

It is found in the membrane. The protein operates within mycotoxin biosynthesis. Functionally, hydroxylase; part of the gene cluster that mediates the biosynthesis of the mycotoxin cyclochlorotine, a hepatotoxic and carcinogenic cyclic chlorinated pentapeptide. Within the pathway, cctR performs the last step by hydroxylating cyclochlorotine to yield hydroxycyclochlorotine. The NRPS cctN initially catalyzes the condensation of L-serine (Ser), Pro, L-2-aminobutyrate (2Abu), Ser, and beta-Phe in this order to produce isocyclotine. After the dichlorination of Pro2 catalyzed by cctP2 to produce isocyclochlorotine, the cctO-mediated transacylation of isocyclochlorotine can furnish cyclochlorotine. The subsequent hydroxylation of cyclochlorotine by cctR yields hydroxycyclochlorotine as the final product. CctP1 probably acts as a phenylalanine aminomutase and provides the uncommon building block beta-Phe. Furthermore, 2Abu can be synthesized from threonine by one of the threonine dehydratases and transaminases localized outside of the cluster. The functions of the remaining proteins encoded by the cluster, cctM and cctT, have not been identified yet. This is Hydroxylase cctR from Talaromyces islandicus (Penicillium islandicum).